The sequence spans 361 residues: tRNA 2-selenouridine synthase (361 aa).

In terms of domain architecture, Rhodanese spans 11 to 134 (LLADTPLIDV…LRQTAIQATW (124 aa)). The S-selanylcysteine intermediate role is filled by Cys94.

This sequence belongs to the SelU family. As to quaternary structure, monomer.

It carries out the reaction 5-methylaminomethyl-2-thiouridine(34) in tRNA + selenophosphate + (2E)-geranyl diphosphate + H2O + H(+) = 5-methylaminomethyl-2-selenouridine(34) in tRNA + (2E)-thiogeraniol + phosphate + diphosphate. The catalysed reaction is 5-methylaminomethyl-2-thiouridine(34) in tRNA + (2E)-geranyl diphosphate = 5-methylaminomethyl-S-(2E)-geranyl-thiouridine(34) in tRNA + diphosphate. The enzyme catalyses 5-methylaminomethyl-S-(2E)-geranyl-thiouridine(34) in tRNA + selenophosphate + H(+) = 5-methylaminomethyl-2-(Se-phospho)selenouridine(34) in tRNA + (2E)-thiogeraniol. It catalyses the reaction 5-methylaminomethyl-2-(Se-phospho)selenouridine(34) in tRNA + H2O = 5-methylaminomethyl-2-selenouridine(34) in tRNA + phosphate. In terms of biological role, involved in the post-transcriptional modification of the uridine at the wobble position (U34) of tRNA(Lys), tRNA(Glu) and tRNA(Gln). Catalyzes the conversion of 2-thiouridine (S2U-RNA) to 2-selenouridine (Se2U-RNA). Acts in a two-step process involving geranylation of 2-thiouridine (S2U) to S-geranyl-2-thiouridine (geS2U) and subsequent selenation of the latter derivative to 2-selenouridine (Se2U) in the tRNA chain. The polypeptide is tRNA 2-selenouridine synthase (Salmonella schwarzengrund (strain CVM19633)).